The chain runs to 335 residues: UPF0353 protein MAP_1207 (335 aa).

2 helical membrane-spanning segments follow: residues 18 to 38 (WFFL…LMQL) and 67 to 87 (LPAI…AGPT). Residues 98–294 (VVMLVIDVSQ…QELKSVYATL (197 aa)) enclose the VWFA domain. Residues 309-329 (VGWVRLGALVLALAALTALLI) form a helical membrane-spanning segment.

Belongs to the UPF0353 family.

Its subcellular location is the cell membrane. In Mycolicibacterium paratuberculosis (strain ATCC BAA-968 / K-10) (Mycobacterium paratuberculosis), this protein is UPF0353 protein MAP_1207.